The chain runs to 404 residues: MSPSDVPINWKRNLTVTWLGCFLTGAAFSLVMPFLPLYVEQLGVTGHSALNMWSGLVFSITFLFSAIASPFWGGLADRKGRKIMLLRSALGMAIVMLLMGMAQNIWQFLILRALLGLLGGFIPNANALIATQAPRHKSGWALGTLSTGGVSGALLGPLAGGLLADHYGLRPVFFITASVLFICFLLTFFFIRENFLPVSKKEMLHVREVVASLKNPRLVLSLFVTTLIIQVATGSIAPILTLYVRELAGNVSNIAFISGMIASVPGVAALLSAPRLGKLGDRIGPEKILIVALIISVLLLIPMSFVQTPWQLALLRFLLGAADGALLPAVQTLLVYNSTNQIAGRIFSYNQSFRDIGNVTGPLMGAAISASYGFRAVFCVTAGVVLFNAIYSWNSLRRRRLAIE.

The next 11 membrane-spanning stretches (helical) occupy residues 19-39, 56-76, 90-110, 113-133, 144-164, 171-191, 222-242, 254-274, 288-308, 317-337, and 376-396; these read LGCF…PLYV, LVFS…GGLA, LGMA…QFLI, ALLG…ATQA, TLST…GLLA, PVFF…FFFI, LFVT…ILTL, IAFI…LSAP, ILIV…FVQT, FLLG…LVYN, and AVFC…WNSL.

This sequence belongs to the major facilitator superfamily. DHA1 family. MdtG (TC 2.A.1.2.20) subfamily.

The protein localises to the cell inner membrane. The polypeptide is Multidrug resistance protein MdtG (Salmonella paratyphi A (strain ATCC 9150 / SARB42)).